Consider the following 214-residue polypeptide: NADH-quinone oxidoreductase subunit C (214 aa).

Belongs to the complex I 30 kDa subunit family. NDH-1 is composed of 14 different subunits. Subunits NuoB, C, D, E, F, and G constitute the peripheral sector of the complex.

The protein resides in the cell inner membrane. It carries out the reaction a quinone + NADH + 5 H(+)(in) = a quinol + NAD(+) + 4 H(+)(out). NDH-1 shuttles electrons from NADH, via FMN and iron-sulfur (Fe-S) centers, to quinones in the respiratory chain. The immediate electron acceptor for the enzyme in this species is believed to be ubiquinone. Couples the redox reaction to proton translocation (for every two electrons transferred, four hydrogen ions are translocated across the cytoplasmic membrane), and thus conserves the redox energy in a proton gradient. The chain is NADH-quinone oxidoreductase subunit C from Francisella tularensis subsp. tularensis (strain WY96-3418).